An 877-amino-acid chain; its full sequence is Neurotrypsin (877 aa).

The first 20 residues, 1 to 20 (MTLARFVLALVLGALPEVVS), serve as a signal peptide directing secretion. Residue asparagine 26 is glycosylated (N-linked (GlcNAc...) asparagine). The segment at 31–90 (HRHRHRHSPPPGLQYPYYLPTQQRPPRTRPPPPLPRFPRPPRALPAQRPHALQAGHTPRP) is disordered. A compositionally biased stretch (low complexity) spans 44–55 (QYPYYLPTQQRP). A compositionally biased stretch (pro residues) spans 58–73 (TRPPPPLPRFPRPPRA). The 73-residue stretch at 95-167 (CPAGEPWVSV…GKVDWGYCDC (73 aa)) folds into the Kringle domain. 20 cysteine pairs are disulfide-bonded: cysteine 95/cysteine 167, cysteine 111/cysteine 151, cysteine 140/cysteine 165, cysteine 197/cysteine 261, cysteine 210/cysteine 271, cysteine 241/cysteine 251, cysteine 307/cysteine 371, cysteine 320/cysteine 381, cysteine 351/cysteine 361, cysteine 414/cysteine 477, cysteine 427/cysteine 487, cysteine 457/cysteine 467, cysteine 527/cysteine 591, cysteine 540/cysteine 601, cysteine 571/cysteine 581, cysteine 621/cysteine 752, cysteine 663/cysteine 679, cysteine 767/cysteine 833, cysteine 796/cysteine 810, and cysteine 823/cysteine 852. SRCR domains lie at 172-273 (VRLR…TCSF), 282-383 (IRLV…SCTP), 389-489 (IRLA…ACYP), and 502-603 (VRLM…ICDY). A zymogen activation region region spans residues 621–632 (CGLRLLHRRQKR). Positions 633 to 876 (IIGGKNSLRG…FVPWIKSVTK (244 aa)) constitute a Peptidase S1 domain. Histidine 678 (charge relay system) is an active-site residue. The N-linked (GlcNAc...) asparagine glycan is linked to asparagine 685. Aspartate 728 (charge relay system) is an active-site residue. Serine 827 functions as the Charge relay system in the catalytic mechanism.

It belongs to the peptidase S1 family.

It localises to the secreted. Plays a role in neuronal plasticity and the proteolytic action may subserve structural reorganizations associated with learning and memory operations. The polypeptide is Neurotrypsin (PRSS12) (Pongo pygmaeus (Bornean orangutan)).